The following is an 831-amino-acid chain: Multiphosphoryl transfer protein (831 aa).

The HPr domain maps to 1–90 (MLTIQFLCPL…EYIQVRFIDS (90 aa)). His-15 (pros-phosphohistidine intermediate; for HPr activity) is an active-site residue. At His-15 the chain carries Phosphohistidine; by EI. The PTS EI stretch occupies residues 119 to 650 (GNVLASGVGV…AVKSQLRQLD (532 aa)). The active-site Tele-phosphohistidine intermediate; for PTS EI activity is His-298. At His-298 the chain carries Phosphohistidine; by autocatalysis. Phosphoenolpyruvate contacts are provided by Arg-405 and Arg-441. Mg(2+) contacts are provided by Glu-540 and Asp-564. Residues 563 to 564 (ND) and Arg-574 contribute to the phosphoenolpyruvate site. Residue Cys-611 is the Proton donor; for EI activity of the active site. The region spanning 685–828 (PLLALENIFV…QSILTLLETE (144 aa)) is the PTS EIIA type-2 domain. His-747 functions as the Tele-phosphohistidine intermediate; for PTS EIIA activity in the catalytic mechanism. His-747 is subject to Phosphohistidine; by HPr.

It belongs to the PEP-utilizing enzyme family. Mg(2+) is required as a cofactor.

Its subcellular location is the cytoplasm. The catalysed reaction is L-histidyl-[protein] + phosphoenolpyruvate = N(pros)-phospho-L-histidyl-[protein] + pyruvate. The enzyme catalyses D-fructose(out) + N(pros)-phospho-L-histidyl-[protein] = D-fructose 1-phosphate(in) + L-histidyl-[protein]. In terms of biological role, multifunctional protein that includes general (non sugar-specific) and sugar-specific components of the phosphoenolpyruvate-dependent sugar phosphotransferase system (sugar PTS). This major carbohydrate active transport system catalyzes the phosphorylation of incoming sugar substrates concomitantly with their translocation across the cell membrane. The enzyme II FryABC PTS system is involved in fructose transport. This is Multiphosphoryl transfer protein (fryA) from Escherichia coli O157:H7.